A 367-amino-acid polypeptide reads, in one-letter code: tRNA/tmRNA (uracil-C(5))-methyltransferase (367 aa).

Positions 190, 218, 223, 239, and 299 each coordinate S-adenosyl-L-methionine. Catalysis depends on Cys-324, which acts as the Nucleophile. Glu-358 serves as the catalytic Proton acceptor.

It belongs to the class I-like SAM-binding methyltransferase superfamily. RNA M5U methyltransferase family. TrmA subfamily.

The enzyme catalyses uridine(54) in tRNA + S-adenosyl-L-methionine = 5-methyluridine(54) in tRNA + S-adenosyl-L-homocysteine + H(+). The catalysed reaction is uridine(341) in tmRNA + S-adenosyl-L-methionine = 5-methyluridine(341) in tmRNA + S-adenosyl-L-homocysteine + H(+). In terms of biological role, dual-specificity methyltransferase that catalyzes the formation of 5-methyluridine at position 54 (m5U54) in all tRNAs, and that of position 341 (m5U341) in tmRNA (transfer-mRNA). In Pectobacterium carotovorum subsp. carotovorum (strain PC1), this protein is tRNA/tmRNA (uracil-C(5))-methyltransferase.